A 123-amino-acid polypeptide reads, in one-letter code: uncharacterized protein (123 aa).

The interval 1 to 24 (MGGGGPPARVQGTEGSQTGGGAVA) is disordered.

This is an uncharacterized protein from Halorubrum pleomorphic virus 1 (HRPV-1).